Here is a 396-residue protein sequence, read N- to C-terminus: Ribosomal RNA large subunit methyltransferase I (396 aa).

One can recognise a PUA domain in the interval 2-81; the sequence is TVRLILAKGR…EVIDCAFFIR (80 aa).

It belongs to the methyltransferase superfamily. RlmI family.

It is found in the cytoplasm. The enzyme catalyses cytidine(1962) in 23S rRNA + S-adenosyl-L-methionine = 5-methylcytidine(1962) in 23S rRNA + S-adenosyl-L-homocysteine + H(+). Specifically methylates the cytosine at position 1962 (m5C1962) of 23S rRNA. This is Ribosomal RNA large subunit methyltransferase I from Yersinia pseudotuberculosis serotype O:1b (strain IP 31758).